The chain runs to 673 residues: Methionine--tRNA ligase (673 aa).

The 'HIGH' region motif lies at Y14–N24. The 'KMSKS' region motif lies at K310 to S314. K313 serves as a coordination point for ATP. Residues V571–S673 form the tRNA-binding domain.

The protein belongs to the class-I aminoacyl-tRNA synthetase family. MetG type 2B subfamily. In terms of assembly, homodimer.

The protein resides in the cytoplasm. The catalysed reaction is tRNA(Met) + L-methionine + ATP = L-methionyl-tRNA(Met) + AMP + diphosphate. Its function is as follows. Is required not only for elongation of protein synthesis but also for the initiation of all mRNA translation through initiator tRNA(fMet) aminoacylation. In Oceanobacillus iheyensis (strain DSM 14371 / CIP 107618 / JCM 11309 / KCTC 3954 / HTE831), this protein is Methionine--tRNA ligase (metG).